Here is a 108-residue protein sequence, read N- to C-terminus: ATP-dependent Clp protease adapter protein ClpS (108 aa).

This sequence belongs to the ClpS family. Binds to the N-terminal domain of the chaperone ClpA.

Its function is as follows. Involved in the modulation of the specificity of the ClpAP-mediated ATP-dependent protein degradation. This chain is ATP-dependent Clp protease adapter protein ClpS, found in Ralstonia nicotianae (strain ATCC BAA-1114 / GMI1000) (Ralstonia solanacearum).